The following is a 116-amino-acid chain: Flagellar transcriptional regulator FlhD (116 aa).

This sequence belongs to the FlhD family. Homodimer; disulfide-linked. Forms a heterohexamer composed of two FlhC and four FlhD subunits. Each FlhC binds a FlhD dimer, forming a heterotrimer, and a hexamer assembles by dimerization of two heterotrimers.

It localises to the cytoplasm. In terms of biological role, functions in complex with FlhC as a master transcriptional regulator that regulates transcription of several flagellar and non-flagellar operons by binding to their promoter region. Activates expression of class 2 flagellar genes, including fliA, which is a flagellum-specific sigma factor that turns on the class 3 genes. Also regulates genes whose products function in a variety of physiological pathways. This is Flagellar transcriptional regulator FlhD from Serratia proteamaculans (strain 568).